The chain runs to 512 residues: Peroxisomal N(1)-acetyl-spermine/spermidine oxidase (512 aa).

Position 1 is an N-acetylmethionine (Met1). A propeptide spanning residues 1–6 (MQSGGR) is cleaved from the precursor. FAD-binding positions include Ala25, Glu46, Arg54, and 70–71 (HW). Substrate-binding residues include His73 and Val195. Val248 contacts FAD. A substrate-binding site is contributed by Asn321. FAD is bound by residues Glu473 and 482 to 483 (TT). Residues 510–512 (PRL) carry the Microbody targeting signal motif.

Belongs to the flavin monoamine oxidase family. In terms of assembly, monomer. FAD serves as cofactor.

It localises to the peroxisome. Its subcellular location is the cytoplasm. The catalysed reaction is N(1)-acetylspermine + O2 + H2O = 3-acetamidopropanal + spermidine + H2O2. It carries out the reaction N(1)-acetylspermidine + O2 + H2O = 3-acetamidopropanal + putrescine + H2O2. The enzyme catalyses N(1),N(12)-diacetylspermine + O2 + H2O = 3-acetamidopropanal + N(1)-acetylspermidine + H2O2. It participates in amine and polyamine metabolism; spermine metabolism. Its function is as follows. Flavoenzyme which catalyzes the oxidation of N(1)-acetylspermine to spermidine and is thus involved in the polyamine back-conversion. Can also oxidize N(1)-acetylspermidine to putrescine. Substrate specificity: N(1)-acetylspermine = N(1)-acetylspermidine &gt; N(1),N(12)-diacylspermine &gt;&gt; spermine. Does not oxidize spermidine. Plays an important role in the regulation of polyamine intracellular concentration. The polypeptide is Peroxisomal N(1)-acetyl-spermine/spermidine oxidase (PAOX) (Bos taurus (Bovine)).